Reading from the N-terminus, the 276-residue chain is 2-dehydro-3-deoxyphosphooctonate aldolase (276 aa).

This sequence belongs to the KdsA family.

Its subcellular location is the cytoplasm. The catalysed reaction is D-arabinose 5-phosphate + phosphoenolpyruvate + H2O = 3-deoxy-alpha-D-manno-2-octulosonate-8-phosphate + phosphate. Its pathway is carbohydrate biosynthesis; 3-deoxy-D-manno-octulosonate biosynthesis; 3-deoxy-D-manno-octulosonate from D-ribulose 5-phosphate: step 2/3. It participates in bacterial outer membrane biogenesis; lipopolysaccharide biosynthesis. The protein is 2-dehydro-3-deoxyphosphooctonate aldolase of Xanthomonas campestris pv. campestris (strain 8004).